A 974-amino-acid polypeptide reads, in one-letter code: Short transient receptor potential channel 4 (974 aa).

The Cytoplasmic segment spans residues 1–324; it reads MAQFYYKRNV…YDEFPGWRRR (324 aa). 4 ANK repeats span residues 29 to 60, 71 to 93, 96 to 118, and 141 to 165; these read LSPSEKAYLNAVEKGDYASVKKSLEEAEIYFK, RTALLIAIENENLELIELLLSFN, VGDALLHAIRKEVVGAVELLLNH, and PDITPIILAAHTNNYEIIKLLVQKG. The multimerization domain stretch occupies residues 87-172; the sequence is ELLLSFNVYV…QKGVSVPRPH (86 aa). Zn(2+)-binding residues include H172, C176, C178, and C181. The stretch at 223–260 forms a coiled coil; that stretch reads LSWELQELSKVENEFKSEYEELSRQCKQFAKDLLDQTR. The interval 254-304 is multimerization domain; sequence DLLDQTRSSRELEIILNYRDDNSLIEEQSGNDLARLKLAIKYRQKEFVAQP. Positions 325–359 form an intramembrane region, discontinuously helical; that stretch reads HWAVKMVTCFIIGLLFPVFSVCYLIAPKSPLGLFI. Over 360–362 the chain is Cytoplasmic; the sequence is RKP. Residues 363–383 traverse the membrane as a helical segment; that stretch reads FIKFICHTASYLTFLFLLLLA. Topologically, residues 384 to 403 are extracellular; it reads SQHIDRSDLNRQGPPPTIVE. Residues 404–418 traverse the membrane as a helical segment; that stretch reads WMILPWVLGFIWGEI. Ca(2+)-binding residues include E417, Q420, N435, and D438. Residues 419 to 432 lie on the Cytoplasmic side of the membrane; it reads KQMWDGGLQDYIHD. Residues 433–453 traverse the membrane as a helical segment; that stretch reads WWNLMDFVMNSLYLATISLKI. Residues 454-475 lie on the Extracellular side of the membrane; sequence VAFVKYSALNPRESWDMWHPTL. Residues 476–498 form a helical membrane-spanning segment; that stretch reads VAEALFAIANIFSSLRLISLFTA. At 499-511 the chain is on the cytoplasmic side; that stretch reads NSHLGPLQISLGR. Residues 512–534 traverse the membrane as a helical segment; that stretch reads MLLDILKFLFIYCLVLLAFANGL. At 535 to 599 the chain is on the extracellular side; it reads NQLYFYYEET…HEFTEFVGAT (65 aa). Residues C549 and C554 are joined by a disulfide bond. A helical transmembrane segment spans residues 600–620; sequence MFGTYNVISLVVLLNMLIAMM. The interval 615–974 is interaction with ITPR1, ITPR2 and ITPR3; sequence MLIAMMNNSY…AHEDYVTTRL (360 aa). The Cytoplasmic portion of the chain corresponds to 621–974; the sequence is NNSYQLIADH…AHEDYVTTRL (354 aa). The interval 765–787 is disordered; that stretch reads ANAASSADSDEKSQSEGNGKDKR. The segment covering 773–784 has biased composition (basic and acidic residues); that stretch reads SDEKSQSEGNGK. Phosphotyrosine; by FYN is present on residues Y956 and Y969. Positions 972-974 are PDZ-binding domain; sequence TRL.

Belongs to the transient receptor (TC 1.A.4) family. STrpC subfamily. TRPC4 sub-subfamily. As to quaternary structure, homotetramer. Heterotetramer with TRPC1 and/or TRPC5. Forms a heteromeric ion channel with TRPC1, with a 1:3 TRPC1:TRPC4 stoichiometry. Interacts with TRPC4AP. Isoform alpha but not isoform beta interacts with ITPR1, ITPR2 and ITPR3. Interacts with NHERF1. Interacts with MX1 and RNF24. Interacts (via CIRB domain) with SESTD1 (via the spectrin 1 repeat) and SPTBN5 (via C-terminus). Interacts with CDH5 and CTNNB1. Interacts (via protein 4.1-binding domain) with EPB41L2. Interacts with PLSCR1. As to expression, abundantly expressed in brain (hippocampal CA1 pyramidal neurons, dentate gyrus granule cells, and cerebral cortical neurons, and in the septal nuclei and the mitral layer of olfactory bulb). Lower levels are detected in other tissues.

It localises to the cell membrane. It carries out the reaction Ca(2+)(in) = Ca(2+)(out). It catalyses the reaction Na(+)(in) = Na(+)(out). The enzyme catalyses Li(+)(in) = Li(+)(out). The catalysed reaction is Cs(+)(in) = Cs(+)(out). With respect to regulation, may be operated by a phosphatidylinositol second messenger system activated by receptor tyrosine kinases or G-protein coupled receptors. May be activated by intracellular calcium store depletion. Forms a receptor-activated non-selective calcium permeant cation channel. Acts as a cell-cell contact-dependent endothelial calcium entry channel. Forms a homomeric ion channel or a heteromeric ion channel with TRPC1; the heteromeric ion channel has reduced calcium permeability compared to the homomeric channel. Also permeable to monovalent ions including sodium, lithium and cesium ions. The chain is Short transient receptor potential channel 4 (Trpc4) from Mus musculus (Mouse).